We begin with the raw amino-acid sequence, 640 residues long: Asparagine synthetase domain-containing protein 1 (640 aa).

Cys2 serves as the catalytic For GATase activity. One can recognise a Glutamine amidotransferase type-2 domain in the interval 2–184; sequence CGICCAVSFS…ASGIFRIDLK (183 aa). In terms of domain architecture, Asparagine synthetase spans 286–602; that stretch reads QFIGVLSTAV…GLTASALLPK (317 aa).

The sequence is that of Asparagine synthetase domain-containing protein 1 (ASNSD1) from Bos taurus (Bovine).